The following is a 238-amino-acid chain: Sugar fermentation stimulation protein homolog (238 aa).

Belongs to the SfsA family.

The sequence is that of Sugar fermentation stimulation protein homolog from Histophilus somni (strain 2336) (Haemophilus somnus).